We begin with the raw amino-acid sequence, 249 residues long: ATP synthase subunits region ORF 6 (249 aa).

The polypeptide is ATP synthase subunits region ORF 6 (Fuscovulum blasticum (Rhodobacter blasticus)).